Consider the following 240-residue polypeptide: Sialidase 85-1.2 (240 aa).

The segment covering 127 to 142 (DDDDGGDDDDEEDSQE) has biased composition (acidic residues). Disordered stretches follow at residues 127–158 (DDDDGGDDDDEEDSQEESSPKESSPEKIGKKP) and 221–240 (HRGGQLWGEPPIPNMRQRDA). The span at 144-155 (SSPKESSPEKIG) shows a compositional bias: basic and acidic residues.

The protein belongs to the glycosyl hydrolase 33 family.

The catalysed reaction is Hydrolysis of alpha-(2-&gt;3)-, alpha-(2-&gt;6)-, alpha-(2-&gt;8)- glycosidic linkages of terminal sialic acid residues in oligosaccharides, glycoproteins, glycolipids, colominic acid and synthetic substrates.. Its function is as follows. Developmentally regulated neuraminidase implicated in parasite invasion of cells. May contribute to the pathology during T.cruzi infection by cleaving sialic acid from cells of the immune system. This is Sialidase 85-1.2 (SA85-1.2) from Trypanosoma cruzi.